The primary structure comprises 433 residues: tRNA-2-methylthio-N(6)-dimethylallyladenosine synthase (433 aa).

An MTTase N-terminal domain is found at 4 to 119; that stretch reads KKLFIQTLGC…ITQAIKTPKF (116 aa). Residues Cys13, Cys50, Cys82, Cys151, Cys155, and Cys158 each coordinate [4Fe-4S] cluster. One can recognise a Radical SAM core domain in the interval 137–370; that stretch reads RNSIYKSYIN…QNRHSEILDK (234 aa). In terms of domain architecture, TRAM spans 373–433; sequence KKQENKTFKV…KRMVLYGEIV (61 aa).

This sequence belongs to the methylthiotransferase family. MiaB subfamily. As to quaternary structure, monomer. It depends on [4Fe-4S] cluster as a cofactor.

The protein resides in the cytoplasm. It carries out the reaction N(6)-dimethylallyladenosine(37) in tRNA + (sulfur carrier)-SH + AH2 + 2 S-adenosyl-L-methionine = 2-methylsulfanyl-N(6)-dimethylallyladenosine(37) in tRNA + (sulfur carrier)-H + 5'-deoxyadenosine + L-methionine + A + S-adenosyl-L-homocysteine + 2 H(+). In terms of biological role, catalyzes the methylthiolation of N6-(dimethylallyl)adenosine (i(6)A), leading to the formation of 2-methylthio-N6-(dimethylallyl)adenosine (ms(2)i(6)A) at position 37 in tRNAs that read codons beginning with uridine. This is tRNA-2-methylthio-N(6)-dimethylallyladenosine synthase from Campylobacter jejuni subsp. jejuni serotype O:2 (strain ATCC 700819 / NCTC 11168).